Here is a 166-residue protein sequence, read N- to C-terminus: MSKVIEMKEKVVAEITEKFEKSIAAVVVDYRGLKVEEVTELRAKFREAGVEYKVYKNTMMRRAARNAGMEEMVADLVGPNAVAFSYEDPVAPARILNDFAKNHKALELKVGFVEGSFYDEEKLKELASVPSREVLIAKLLSSFNAPMANFACLIKAIADKKTEQEA.

The protein belongs to the universal ribosomal protein uL10 family. As to quaternary structure, part of the ribosomal stalk of the 50S ribosomal subunit. The N-terminus interacts with L11 and the large rRNA to form the base of the stalk. The C-terminus forms an elongated spine to which L12 dimers bind in a sequential fashion forming a multimeric L10(L12)X complex.

Forms part of the ribosomal stalk, playing a central role in the interaction of the ribosome with GTP-bound translation factors. This Alkaliphilus metalliredigens (strain QYMF) protein is Large ribosomal subunit protein uL10.